A 319-amino-acid polypeptide reads, in one-letter code: Ribosomal large subunit pseudouridine synthase C (319 aa).

The S4 RNA-binding domain maps to 20–83 (QRIDNFLRTQ…AEREEEAVSP (64 aa)). The active site involves aspartate 144.

It belongs to the pseudouridine synthase RluA family.

It catalyses the reaction uridine(955/2504/2580) in 23S rRNA = pseudouridine(955/2504/2580) in 23S rRNA. Responsible for synthesis of pseudouridine from uracil at positions 955, 2504 and 2580 in 23S ribosomal RNA. The polypeptide is Ribosomal large subunit pseudouridine synthase C (rluC) (Escherichia coli O157:H7).